The primary structure comprises 353 residues: Phospho-N-acetylmuramoyl-pentapeptide-transferase (353 aa).

10 helical membrane passes run 24–44 (LGFF…ILWA), 66–86 (TPTM…VLCA), 88–108 (LGNL…FVGF), 129–149 (FGML…KGLD), 160–180 (PLFE…FLST), 192–212 (GLAS…VYVA), 229–249 (VGEL…FLWY), 256–276 (VFMG…NAIV), 281–301 (ILLV…ILQV), and 330–350 (KVIV…LLSL).

This sequence belongs to the glycosyltransferase 4 family. MraY subfamily. Requires Mg(2+) as cofactor.

It is found in the cell inner membrane. The catalysed reaction is UDP-N-acetyl-alpha-D-muramoyl-L-alanyl-gamma-D-glutamyl-meso-2,6-diaminopimeloyl-D-alanyl-D-alanine + di-trans,octa-cis-undecaprenyl phosphate = di-trans,octa-cis-undecaprenyl diphospho-N-acetyl-alpha-D-muramoyl-L-alanyl-D-glutamyl-meso-2,6-diaminopimeloyl-D-alanyl-D-alanine + UMP. Its pathway is cell wall biogenesis; peptidoglycan biosynthesis. Catalyzes the initial step of the lipid cycle reactions in the biosynthesis of the cell wall peptidoglycan: transfers peptidoglycan precursor phospho-MurNAc-pentapeptide from UDP-MurNAc-pentapeptide onto the lipid carrier undecaprenyl phosphate, yielding undecaprenyl-pyrophosphoryl-MurNAc-pentapeptide, known as lipid I. The protein is Phospho-N-acetylmuramoyl-pentapeptide-transferase of Helicobacter pylori (strain ATCC 700392 / 26695) (Campylobacter pylori).